The sequence spans 487 residues: MTELFIDGAWVAGSGPVFASRNPGTDAVAWQGDSASAADVDRAVASARRAFAGWSALDFEARCEIVKRFAALLTERKEAIATAIGRETGKPLWEARTEVASMAAKVGISIQAYQERTGEKRQDMADGVAVLRHRPHGVVAVFGPYNFPGHLPNGHIVPALIAGNTVVFKPSELAPGVARATVEVWQAAGLPPGVLNLVQGEKDTGIALANHRQIDGLFFTGSSDTGTLLHKQFGGRPEIVLALEMGGNNPLVIGEVEDVDAAVHHTIQSAFLSAGQRCTCARRIFVPQGAFGDRFLARFADVTSKITADVFDADPQPFMGAVISARAAAKLVDAQSRLVEQGAKPIIAMTQRDPRLGFVNAAIADVTGVANLPDEEHFGPLAQVVRYTTLDDAIERANDTAFGLSAGLLADDPKVWEHFRRTIRAGIVNWNRPTNGASSAAPFGGTGRSGNHRPSAYYAADYCAYPMASVESTQLTLPASLSPGLHF.

Residue glycine 221–glycine 226 participates in NAD(+) binding. Active-site residues include glutamate 244 and cysteine 278.

This sequence belongs to the aldehyde dehydrogenase family. AstD subfamily.

The enzyme catalyses N-succinyl-L-glutamate 5-semialdehyde + NAD(+) + H2O = N-succinyl-L-glutamate + NADH + 2 H(+). It participates in amino-acid degradation; L-arginine degradation via AST pathway; L-glutamate and succinate from L-arginine: step 4/5. Catalyzes the NAD-dependent reduction of succinylglutamate semialdehyde into succinylglutamate. This chain is N-succinylglutamate 5-semialdehyde dehydrogenase, found in Burkholderia cenocepacia (strain ATCC BAA-245 / DSM 16553 / LMG 16656 / NCTC 13227 / J2315 / CF5610) (Burkholderia cepacia (strain J2315)).